The primary structure comprises 125 residues: Large ribosomal subunit protein bL20 (125 aa).

The protein belongs to the bacterial ribosomal protein bL20 family.

Functionally, binds directly to 23S ribosomal RNA and is necessary for the in vitro assembly process of the 50S ribosomal subunit. It is not involved in the protein synthesizing functions of that subunit. This Methylobacterium sp. (strain 4-46) protein is Large ribosomal subunit protein bL20.